The following is a 548-amino-acid chain: MSSTVIDRARPAGHRAPHRGSGFTGTLGLLRLYLRRDRVSLPLWVLLLSVPLATVYIASVETVYPDRSARAAAAAAIMASPAQRALYGPVYNDSLGAVGIWKAGMFHTLIAVAVILTVIRHTRADEESGRAELIDSTVVGRYANLTGALLLSFGASIATGAIGALGLLATDVAPAGSVAFGVALAASGMVFTAVAAVAAQLSPSARFTRAVAFAVLGTAFALRAIGDAGSGTLSWCSPLGWSLQVRPYAGERWWVLLLSLATAAVLTVLAYRLRAGRDVGAGLIAERPGAGTAGPMLSEPFGLAWRLNRGSLLLWTVGLCLYGLVMGSVVHGIGDQLGDNTAVRDIVTRMGGTGALEQAFLALAFTMIGMVAAAFAVSLTLRLHQEETGLRAETLLAGAVSRTHWLASHLAMALAGSAVATLISGVAAGLAYGMTVGDVGGKLPTVVGTAAVQLPAVWLLSAVTVGLFGLAPRFTPVAWGVLVGFIALYLLGSLAGFPQMLLNLEPFAHIPRVGGGDFTAVPLLWLLAIDAALITLGAMAFRRRDVRC.

Transmembrane regions (helical) follow at residues 39 to 59 (VSLPLWVLLLSVPLATVYIAS), 99 to 119 (GIWKAGMFHTLIAVAVILTVI), 148 to 168 (ALLLSFGASIATGAIGALGLL), 178 to 198 (VAFGVALAASGMVFTAVAAVA), 210 to 230 (AVAFAVLGTAFALRAIGDAGS), 253 to 273 (WWVLLLSLATAAVLTVLAYRL), 313 to 333 (LLWTVGLCLYGLVMGSVVHGI), 359 to 379 (AFLALAFTMIGMVAAAFAVSL), 410 to 430 (LAMALAGSAVATLISGVAAGL), 450 to 470 (AAVQLPAVWLLSAVTVGLFGL), 477 to 497 (VAWGVLVGFIALYLLGSLAGF), and 521 to 541 (VPLLWLLAIDAALITLGAMAF).

As to quaternary structure, the complex is probably composed of two ATP-binding proteins (Rv1218c) and a transmembrane protein (Rv1217c).

The protein localises to the cell inner membrane. In terms of biological role, probably part of the ABC transporter complex Rv1217c-Rv1218c involved in the resistance to a wide range of structurally unrelated drugs. Probably responsible for the translocation of the substrate across the membrane. This chain is Multidrug efflux system permease protein Rv1217c, found in Mycobacterium tuberculosis (strain ATCC 25618 / H37Rv).